The chain runs to 457 residues: Phosphatidate cytidylyltransferase (457 aa).

The next 6 helical transmembrane spans lie at 71–91 (VMIS…IVLI), 154–174 (FIVT…FVLF), 188–208 (GSLC…HLII), 214–234 (GLFW…FAYL), 255–275 (GFLG…RILS), and 330–350 (FHAL…GFFA).

The protein belongs to the CDS family. Homodimer. Mg(2+) serves as cofactor.

The protein resides in the endoplasmic reticulum membrane. It is found in the cytoplasmic vesicle. Its subcellular location is the secretory vesicle. It catalyses the reaction a 1,2-diacyl-sn-glycero-3-phosphate + CTP + H(+) = a CDP-1,2-diacyl-sn-glycerol + diphosphate. Its pathway is phospholipid metabolism; CDP-diacylglycerol biosynthesis; CDP-diacylglycerol from sn-glycerol 3-phosphate: step 3/3. Supplies CDP-diacylglycerol, which may play an important role as both a precursor to phosphoinositide biosynthesis in the plasma membrane and as a negative effector of phosphatidylinositol 4-kinase activity, thereby exerting an effect on cell proliferation via a lipid-dependent signal transduction cascade. This is Phosphatidate cytidylyltransferase (CDS1) from Saccharomyces cerevisiae (strain ATCC 204508 / S288c) (Baker's yeast).